A 136-amino-acid polypeptide reads, in one-letter code: Large ribosomal subunit protein uL16 (136 aa).

It belongs to the universal ribosomal protein uL16 family. In terms of assembly, part of the 50S ribosomal subunit.

Functionally, binds 23S rRNA and is also seen to make contacts with the A and possibly P site tRNAs. The chain is Large ribosomal subunit protein uL16 from Orientia tsutsugamushi (strain Ikeda) (Rickettsia tsutsugamushi).